An 86-amino-acid chain; its full sequence is Large ribosomal subunit protein bL31B (86 aa).

The protein belongs to the bacterial ribosomal protein bL31 family. Type B subfamily. Part of the 50S ribosomal subunit.

The sequence is that of Large ribosomal subunit protein bL31B from Streptococcus equi subsp. zooepidemicus (strain H70).